Reading from the N-terminus, the 338-residue chain is DNA-directed RNA polymerase subunit alpha (338 aa).

The segment at 1-226 (MLIAQRPSLT…ELFGLARELN (226 aa)) is alpha N-terminal domain (alpha-NTD). The alpha C-terminal domain (alpha-CTD) stretch occupies residues 243 to 338 (LAADLVMPIE…DAGFLETEHY (96 aa)).

The protein belongs to the RNA polymerase alpha chain family. Homodimer. The RNAP catalytic core consists of 2 alpha, 1 beta, 1 beta' and 1 omega subunit. When a sigma factor is associated with the core the holoenzyme is formed, which can initiate transcription.

The enzyme catalyses RNA(n) + a ribonucleoside 5'-triphosphate = RNA(n+1) + diphosphate. Functionally, DNA-dependent RNA polymerase catalyzes the transcription of DNA into RNA using the four ribonucleoside triphosphates as substrates. The polypeptide is DNA-directed RNA polymerase subunit alpha (Streptomyces avermitilis (strain ATCC 31267 / DSM 46492 / JCM 5070 / NBRC 14893 / NCIMB 12804 / NRRL 8165 / MA-4680)).